The primary structure comprises 915 residues: Coronin-7 (915 aa).

WD repeat units follow at residues 75–115 (CHSD…QALP), 124–163 (PEDA…PLTE), 166–205 (THGD…EAAQ), and 209–253 (AHEN…AALT). Residues 396–456 (TSCLAPPAEL…TSPSQRSLQS (61 aa)) form a disordered region. Composition is skewed to low complexity over residues 399 to 413 (LAPP…AQPA) and 420 to 450 (SSTP…TSPS). S453 and S456 each carry phosphoserine. K463 participates in a covalent cross-link: Glycyl lysine isopeptide (Lys-Gly) (interchain with G-Cter in ubiquitin). 4 WD repeats span residues 533–573 (QNGV…LQEV), 583–623 (GHTE…EQLR), 626–665 (GHRD…EPLQ), and 719–759 (DVAP…PFFL). The interval 850-915 (PPGMTPVSQA…FEGVDEDEWD (66 aa)) is disordered. A compositionally biased stretch (low complexity) spans 859-869 (APREAPARRAP). Positions 874 to 886 (LEEKSDQQKKEEL) are enriched in basic and acidic residues. At S905 the chain carries Phosphoserine.

Belongs to the WD repeat coronin family. As to quaternary structure, interacts with clathrin adapter AP1 complex. This interaction takes place at Golgi membranes and not AP1-positive endosomal membranes. Interacts (when ubiquitinated at Lys-463) with EPS15. Post-translationally, the membrane-associated form is phosphorylated on tyrosine residues. In terms of processing, ubiquitinated via 'Lys-33'-linked ubiquitin chains by the BCR(KLHL20) E3 ubiquitin ligase complex: 'Lys-33'-linked ubiquitination promotes interaction with EPS15 and facilitates actin polymerization at the trans-Golgi network, thereby facilitating post-Golgi trafficking. Deubiquitinated by ZRANB1/TRABID.

It is found in the golgi apparatus membrane. Its subcellular location is the golgi apparatus. It localises to the trans-Golgi network. The protein resides in the cytoplasmic vesicle. The protein localises to the cytoplasm. It is found in the cytosol. In terms of biological role, F-actin regulator involved in anterograde Golgi to endosome transport: upon ubiquitination via 'Lys-33'-linked ubiquitin chains by the BCR(KLHL20) E3 ubiquitin ligase complex, interacts with EPS15 and localizes to the trans-Golgi network, where it promotes actin polymerization, thereby facilitating post-Golgi trafficking. May play a role in the maintenance of the Golgi apparatus morphology. This Bos taurus (Bovine) protein is Coronin-7 (CORO7).